A 144-amino-acid polypeptide reads, in one-letter code: Transcriptional regulator SlyA (144 aa).

The 134-residue stretch at 2–135 folds into the HTH marR-type domain; sequence ESPLGSDLAR…LIKLIAKLEH (134 aa). The segment at residues 49–72 is a DNA-binding region (H-T-H motif); the sequence is QIQLAKAIGIEQPSLVRTLDQLED.

This sequence belongs to the SlyA family. As to quaternary structure, homodimer.

The protein localises to the cytoplasm. Transcription regulator that can specifically activate or repress expression of target genes. Required for virulence and survival in the macrophage environment. Probably activates the transcription of ssrB. Independently of ssrB activation, capable of stimulating the expression of virulence genes found on pathogenicity island 2 (SPI2). Probably activates expression of ispA, xseB genes, and of omp operon. In Salmonella typhimurium (strain LT2 / SGSC1412 / ATCC 700720), this protein is Transcriptional regulator SlyA.